Consider the following 606-residue polypeptide: DNA mismatch repair protein MutL (606 aa).

The disordered stretch occupies residues 350-371 (GWRPSAPSAPWTPEASPSRPYQ).

Belongs to the DNA mismatch repair MutL/HexB family.

In terms of biological role, this protein is involved in the repair of mismatches in DNA. It is required for dam-dependent methyl-directed DNA mismatch repair. May act as a 'molecular matchmaker', a protein that promotes the formation of a stable complex between two or more DNA-binding proteins in an ATP-dependent manner without itself being part of a final effector complex. This chain is DNA mismatch repair protein MutL, found in Rhizobium rhizogenes (strain K84 / ATCC BAA-868) (Agrobacterium radiobacter).